The chain runs to 399 residues: Phosphoglycerate kinase (399 aa).

Residues 22–24 (DFN), Arg-38, 61–64 (HLGR), Arg-120, and Arg-153 each bind substrate. Residues Lys-206, Gly-297, Glu-328, and 354-357 (GGDT) each bind ATP.

It belongs to the phosphoglycerate kinase family. In terms of assembly, monomer.

Its subcellular location is the cytoplasm. It carries out the reaction (2R)-3-phosphoglycerate + ATP = (2R)-3-phospho-glyceroyl phosphate + ADP. The protein operates within carbohydrate degradation; glycolysis; pyruvate from D-glyceraldehyde 3-phosphate: step 2/5. The sequence is that of Phosphoglycerate kinase from Campylobacter concisus (strain 13826).